The following is a 116-amino-acid chain: Protein AV2 (116 aa).

The protein belongs to the geminiviridae protein AV2/V2 family. Interacts with host SGS3.

It localises to the host cytoplasm. The protein resides in the host perinuclear region. Its function is as follows. Through its interaction with host SGS3, acts as a suppressor of RNA-mediated gene silencing, also known as post-transcriptional gene silencing (PTGS), a mechanism of plant viral defense that limits the accumulation of viral RNAs. This chain is Protein AV2, found in Mungbean yellow mosaic virus (strain Vigna) (MYMV).